The primary structure comprises 73 residues: Large ribosomal subunit protein bL31c (73 aa).

The protein belongs to the bacterial ribosomal protein bL31 family. Type A subfamily. As to quaternary structure, part of the 50S ribosomal subunit.

The protein resides in the plastid. The protein localises to the chloroplast. Its function is as follows. Binds the 23S rRNA. This chain is Large ribosomal subunit protein bL31c, found in Palmaria palmata (Dulse).